Reading from the N-terminus, the 360-residue chain is MAEVDLESDQIRLKCIRKEGFFTVPPEHRLGRCRSVKEFEKLNRIGEGTYGIVYRARDTQTDEIVALKKVRMDKEKDGIPISSLREITLLLRLRHPNIVELKEVVVGNHLESIFLVMGYCEQDLASLLENMPTPFSEAQVKCIMLQVLRGLQYLHRNFIIHRDLKVSNLLMTDKGCVKTADFGLARAYGVPVKPMTPKVVTLWYRAPELLLGTTTQTTSIDMWAVGCILAELLAHKPLLPGTSEIHQIDLIVQLLGTPSENIWPGFSKLPLAGQYSLRKQPYNNLKHKFPWLSEAGLRLLNFLFMYDPKKRATSGDCLESSYFKEKPLPCEPELMPTFPHHRNKRAAPAAAEGQSKRCRP.

The region spanning 39–323 (FEKLNRIGEG…SGDCLESSYF (285 aa)) is the Protein kinase domain. Residues 45–53 (IGEGTYGIV) and K68 contribute to the ATP site. Catalysis depends on D163, which acts as the Proton acceptor. T196 is subject to Phosphothreonine. Residues 334 to 360 (LMPTFPHHRNKRAAPAAAEGQSKRCRP) form a disordered region.

Belongs to the protein kinase superfamily. CMGC Ser/Thr protein kinase family. CDC2/CDKX subfamily. In terms of assembly, heterodimer with CCNQ, the interaction is required for kinase activity. Interacts with ETS2. Interacts with PRK2.

It localises to the cytoplasm. The protein resides in the cytoskeleton. The protein localises to the cilium basal body. It carries out the reaction L-seryl-[protein] + ATP = O-phospho-L-seryl-[protein] + ADP + H(+). The enzyme catalyses L-threonyl-[protein] + ATP = O-phospho-L-threonyl-[protein] + ADP + H(+). In terms of biological role, cyclin-dependent kinase that phosphorylates the transcription factor ETS2 (in vitro) and positively controls its proteasomal degradation (in cells). Involved in the regulation of actin cytoskeleton organization through the phosphorylation of actin dynamics regulators such as PKN2. Is a negative regulator of ciliogenesis through phosphorylation of PKN2 and promotion of RhoA signaling. The polypeptide is Cyclin-dependent kinase 10 (Cdk10) (Mus musculus (Mouse)).